A 167-amino-acid polypeptide reads, in one-letter code: MHWGTLCGFLWLWPYLFYVQAVPIQKVQDDTKTLIKTIVTRINDISHTQSVSSKQKVTGLDFIPGLHPILTLSKMDQTLAVYQQILTSMPSRNVIQISNDLENLRDLLHVLAFSKSCHLPWASGLETLDSLGGVLEASGYSTEVVALSRLQGSLQDMLWQLDLSPGC.

An N-terminal signal peptide occupies residues 1-21 (MHWGTLCGFLWLWPYLFYVQA). The cysteines at positions 117 and 167 are disulfide-linked.

The protein belongs to the leptin family. As to quaternary structure, interacts with SIGLEC6. Adipose tissue is the main source of leptin. It is also produced by other peripheral tissues such as the skeletal muscle. Expressed by intercalated and striated tracts of submandibular and parotid salivary gland intralobular ducts. Detected by fundic epithelium of the gastric mucosa. Secreted into blood and gastric juice.

The protein resides in the secreted. Its function is as follows. Key player in the regulation of energy balance and body weight control. Once released into the circulation, has central and peripheral effects by binding LEPR, found in many tissues, which results in the activation of several major signaling pathways. In the hypothalamus, acts as an appetite-regulating factor that induces a decrease in food intake and an increase in energy consumption by inducing anorexinogenic factors and suppressing orexigenic neuropeptides, also regulates bone mass and secretion of hypothalamo-pituitary-adrenal hormones. In the periphery, increases basal metabolism, influences reproductive function, regulates pancreatic beta-cell function and insulin secretion, is pro-angiogenic for endothelial cell and affects innate and adaptive immunity. In the arcuate nucleus of the hypothalamus, activates by depolarization POMC neurons inducing FOS and SOCS3 expression to release anorexigenic peptides and inhibits by hyperpolarization NPY neurons inducing SOCS3 with a consequent reduction on release of orexigenic peptides. In addition to its known satiety inducing effect, has a modulatory role in nutrient absorption. In the intestine, reduces glucose absorption by enterocytes by activating PKC and leading to a sequential activation of p38, PI3K and ERK signaling pathways which exerts an inhibitory effect on glucose absorption. Acts as a growth factor on certain tissues, through the activation of different signaling pathways increases expression of genes involved in cell cycle regulation such as CCND1, via JAK2-STAT3 pathway, or VEGFA, via MAPK1/3 and PI3K-AKT1 pathways. May also play an apoptotic role via JAK2-STAT3 pathway and up-regulation of BIRC5 expression. Pro-angiogenic, has mitogenic activity on vascular endothelial cells and plays a role in matrix remodeling by regulating the expression of matrix metalloproteinases (MMPs) and tissue inhibitors of metalloproteinases (TIMPs). In innate immunity, modulates the activity and function of neutrophils by increasing chemotaxis and the secretion of oxygen radicals. Increases phagocytosis by macrophages and enhances secretion of pro-inflammatory mediators. Increases cytotoxic ability of NK cells. Plays a pro-inflammatory role, in synergy with IL1B, by inducing NOS2 which promotes the production of IL6, IL8 and Prostaglandin E2, through a signaling pathway that involves JAK2, PI3K, MAP2K1/MEK1 and MAPK14/p38. In adaptive immunity, promotes the switch of memory T-cells towards T helper-1 cell immune responses. Increases CD4(+)CD25(-) T-cell proliferation and reduces autophagy during TCR (T-cell receptor) stimulation, through MTOR signaling pathway activation and BCL2 up-regulation. In Homo sapiens (Human), this protein is Leptin.